A 79-amino-acid chain; its full sequence is MLILTRRPGEALYLDDNIKITVLSVQGRQVKLGLEIPAETTVYREEVYLKIKEQNRLALENTEQDLLAATELWQKKEKK.

It belongs to the CsrA/RsmA family. In terms of assembly, homodimer; the beta-strands of each monomer intercalate to form a hydrophobic core, while the alpha-helices form wings that extend away from the core.

Its subcellular location is the cytoplasm. A translational regulator that binds mRNA to regulate translation initiation and/or mRNA stability. Usually binds in the 5'-UTR at or near the Shine-Dalgarno sequence preventing ribosome-binding, thus repressing translation. Its main target seems to be the major flagellin gene, while its function is anatagonized by FliW. In Maridesulfovibrio salexigens (strain ATCC 14822 / DSM 2638 / NCIMB 8403 / VKM B-1763) (Desulfovibrio salexigens), this protein is Translational regulator CsrA.